Consider the following 214-residue polypeptide: ATP phosphoribosyltransferase (214 aa).

This sequence belongs to the ATP phosphoribosyltransferase family. Short subfamily. Heteromultimer composed of HisG and HisZ subunits.

It localises to the cytoplasm. The catalysed reaction is 1-(5-phospho-beta-D-ribosyl)-ATP + diphosphate = 5-phospho-alpha-D-ribose 1-diphosphate + ATP. It functions in the pathway amino-acid biosynthesis; L-histidine biosynthesis; L-histidine from 5-phospho-alpha-D-ribose 1-diphosphate: step 1/9. Functionally, catalyzes the condensation of ATP and 5-phosphoribose 1-diphosphate to form N'-(5'-phosphoribosyl)-ATP (PR-ATP). Has a crucial role in the pathway because the rate of histidine biosynthesis seems to be controlled primarily by regulation of HisG enzymatic activity. This Azoarcus sp. (strain BH72) protein is ATP phosphoribosyltransferase.